The chain runs to 373 residues: Enoyl-[acyl-carrier-protein] reductase, mitochondrial (373 aa).

A mitochondrion-targeting transit peptide spans 1–53 (MLVSQRVTGARARAPQLAGLLEAWYRHGRTTSSYSALSEPSRVRALVYGNHGD). Lys-61 carries the N6-acetyllysine; alternate modification. Residue Lys-61 is modified to N6-succinyllysine; alternate. Tyr-94 functions as the Proton donor in the catalytic mechanism. NADP(+)-binding positions include Asn-167, 193-196 (NSGV), and 216-218 (RDR). 2 positions are modified to N6-acetyllysine; alternate: Lys-252 and Lys-267. Residues Lys-252 and Lys-267 each carry the N6-succinyllysine; alternate modification. NADP(+) contacts are provided by residues 285–288 (YGGM) and 310–312 (FWL). Lys-316 is modified (N6-succinyllysine). Lys-368 serves as a coordination point for NADP(+).

Belongs to the zinc-containing alcohol dehydrogenase family. Quinone oxidoreductase subfamily. As to quaternary structure, homodimer. As to expression, expressed in Purkinje cells (at protein level).

Its subcellular location is the mitochondrion. It catalyses the reaction a 2,3-saturated acyl-[ACP] + NADP(+) = a (2E)-enoyl-[ACP] + NADPH + H(+). It carries out the reaction (2E)-butenoyl-[ACP] + NADPH + H(+) = butanoyl-[ACP] + NADP(+). The catalysed reaction is (2E)-hexenoyl-[ACP] + NADPH + H(+) = hexanoyl-[ACP] + NADP(+). The enzyme catalyses (2E)-octenoyl-[ACP] + NADPH + H(+) = octanoyl-[ACP] + NADP(+). It catalyses the reaction (2E)-decenoyl-[ACP] + NADPH + H(+) = decanoyl-[ACP] + NADP(+). It carries out the reaction (2E)-dodecenoyl-[ACP] + NADPH + H(+) = dodecanoyl-[ACP] + NADP(+). The catalysed reaction is (2E)-tetradecenoyl-[ACP] + NADPH + H(+) = tetradecanoyl-[ACP] + NADP(+). The enzyme catalyses (2E)-hexadecenoyl-[ACP] + NADPH + H(+) = hexadecanoyl-[ACP] + NADP(+). In terms of biological role, catalyzes the NADPH-dependent reduction of trans-2-enoyl thioesters in mitochondrial fatty acid synthesis (fatty acid synthesis type II). Fatty acid chain elongation in mitochondria uses acyl carrier protein (ACP) as an acyl group carrier, but the enzyme accepts both ACP and CoA thioesters as substrates in vitro. Displays a preference for medium-chain over short- and long-chain substrates. May provide the octanoyl chain used for lipoic acid biosynthesis, regulating protein lipoylation and mitochondrial respiratory activity particularly in Purkinje cells. Involved in iron homeostasis; affecting Fe-S cluster assembly and ceramide metabolism. Required for proper morphology and bioenergetic functions of mitochondria. Required for maintenance of neurons. The protein is Enoyl-[acyl-carrier-protein] reductase, mitochondrial (Mecr) of Mus musculus (Mouse).